The primary structure comprises 440 residues: 3-phosphoshikimate 1-carboxyvinyltransferase (440 aa).

3-phosphoshikimate contacts are provided by Lys-19, Ser-20, and Arg-24. A phosphoenolpyruvate-binding site is contributed by Lys-19. Phosphoenolpyruvate contacts are provided by Gly-92 and Arg-121. Positions 166, 168, 315, and 342 each coordinate 3-phosphoshikimate. Gln-168 provides a ligand contact to phosphoenolpyruvate. The Proton acceptor role is filled by Asp-315. Arg-346 and Arg-399 together coordinate phosphoenolpyruvate.

It belongs to the EPSP synthase family. In terms of assembly, monomer.

It localises to the cytoplasm. The catalysed reaction is 3-phosphoshikimate + phosphoenolpyruvate = 5-O-(1-carboxyvinyl)-3-phosphoshikimate + phosphate. It functions in the pathway metabolic intermediate biosynthesis; chorismate biosynthesis; chorismate from D-erythrose 4-phosphate and phosphoenolpyruvate: step 6/7. Functionally, catalyzes the transfer of the enolpyruvyl moiety of phosphoenolpyruvate (PEP) to the 5-hydroxyl of shikimate-3-phosphate (S3P) to produce enolpyruvyl shikimate-3-phosphate and inorganic phosphate. This Leptospira interrogans serogroup Icterohaemorrhagiae serovar Lai (strain 56601) protein is 3-phosphoshikimate 1-carboxyvinyltransferase.